A 449-amino-acid polypeptide reads, in one-letter code: MREIVHVQGGQCGNQIGAKFWEVISDEHGIAPTGTYKGDSDLQLERISVFYNEATGGRYVPRAVLMDLEPGTMDSVRSGPFGQLFRPDNFVFGQTGAGNNWAKGHYTEGAELIDSVLDVVRKEAEGCDCLQGFQVTHSLGGGTGSGMGTLLISKVREEYPDRIMETFSVFPSPKVSDTVVEPYNATLSVHQLVENADEVQVIDNEALYDICFRTLKLTTPTYGDLNHLVSAAMSGVTCSLRFPGQLNSDLRKLAVNLVPFPRLHFFLIGFAPLTSRGSQQYRALTVPELTQQMFDAKNMMCASDPRHGRYLTACALFRGRMSTKEVDEQMLNVQNKNSSYFVEWIPNNMKSGVCDIPPKGLKMSVTFVGNSTAIQEMFKRVSDQFTAMFRRKAFLHWYTGEGMDEMEFTEAESNMNDLVSEYQQYQDATAEEEGEFDEEEGVMDAEGAA.

The GTP site is built by glutamine 11, glutamate 69, serine 138, glycine 142, threonine 143, glycine 144, asparagine 204, and asparagine 226. Position 69 (glutamate 69) interacts with Mg(2+). A disordered region spans residues 426–449; sequence QDATAEEEGEFDEEEGVMDAEGAA. Positions 429–443 are enriched in acidic residues; the sequence is TAEEEGEFDEEEGVM.

Belongs to the tubulin family. In terms of assembly, dimer of alpha and beta chains. A typical microtubule is a hollow water-filled tube with an outer diameter of 25 nm and an inner diameter of 15 nM. Alpha-beta heterodimers associate head-to-tail to form protofilaments running lengthwise along the microtubule wall with the beta-tubulin subunit facing the microtubule plus end conferring a structural polarity. Microtubules usually have 13 protofilaments but different protofilament numbers can be found in some organisms and specialized cells. The cofactor is Mg(2+).

It is found in the cytoplasm. The protein resides in the cytoskeleton. In terms of biological role, tubulin is the major constituent of microtubules, a cylinder consisting of laterally associated linear protofilaments composed of alpha- and beta-tubulin heterodimers. Microtubules grow by the addition of GTP-tubulin dimers to the microtubule end, where a stabilizing cap forms. Below the cap, tubulin dimers are in GDP-bound state, owing to GTPase activity of alpha-tubulin. The protein is Tubulin beta chain of Eimeria tenella (Coccidian parasite).